Here is a 1000-residue protein sequence, read N- to C-terminus: Chloride channel protein D (1000 aa).

Composition is skewed to low complexity over residues methionine 1 to asparagine 16 and asparagine 38 to valine 60. A disordered region spans residues methionine 1–glutamate 90. The Cytoplasmic portion of the chain corresponds to methionine 1–tryptophan 256. Residues arginine 71–glutamate 80 show a composition bias toward basic and acidic residues. 10 consecutive transmembrane segments (helical) span residues isoleucine 257–valine 277, alanine 290–leucine 310, glycine 416–leucine 436, phenylalanine 442–methionine 462, isoleucine 493–isoleucine 513, leucine 534–phenylalanine 554, leucine 678–alanine 698, methionine 710–glycine 730, valine 733–serine 753, and tyrosine 772–histidine 792. CBS domains lie at methionine 824–valine 881 and methionine 926–leucine 984.

The protein belongs to the chloride channel (TC 2.A.49) family.

It localises to the membrane. Its function is as follows. Voltage-gated chloride channel. Chloride channels may have several functions including the regulation of cell volume, membrane potential stabilization and signal transduction. Required for normal aggregation. This is Chloride channel protein D (clcD) from Dictyostelium discoideum (Social amoeba).